The sequence spans 158 residues: Transcription elongation factor GreA (158 aa).

The protein belongs to the GreA/GreB family.

In terms of biological role, necessary for efficient RNA polymerase transcription elongation past template-encoded arresting sites. The arresting sites in DNA have the property of trapping a certain fraction of elongating RNA polymerases that pass through, resulting in locked ternary complexes. Cleavage of the nascent transcript by cleavage factors such as GreA or GreB allows the resumption of elongation from the new 3'terminus. GreA releases sequences of 2 to 3 nucleotides. This is Transcription elongation factor GreA from Rhizobium etli (strain ATCC 51251 / DSM 11541 / JCM 21823 / NBRC 15573 / CFN 42).